Consider the following 338-residue polypeptide: 1-aminocyclopropane-1-carboxylate deaminase (338 aa).

N6-(pyridoxal phosphate)lysine is present on Lys-51. Ser-78 serves as the catalytic Nucleophile.

This sequence belongs to the ACC deaminase/D-cysteine desulfhydrase family. As to quaternary structure, homotrimer. Pyridoxal 5'-phosphate is required as a cofactor.

The catalysed reaction is 1-aminocyclopropane-1-carboxylate + H2O = 2-oxobutanoate + NH4(+). Catalyzes a cyclopropane ring-opening reaction, the irreversible conversion of 1-aminocyclopropane-1-carboxylate (ACC) to ammonia and alpha-ketobutyrate. Allows growth on ACC as a nitrogen source. This Burkholderia ambifaria (strain ATCC BAA-244 / DSM 16087 / CCUG 44356 / LMG 19182 / AMMD) (Burkholderia cepacia (strain AMMD)) protein is 1-aminocyclopropane-1-carboxylate deaminase.